Reading from the N-terminus, the 466-residue chain is Phage-like element PBSX protein XkdK (466 aa).

The protein belongs to the myoviridae tail sheath protein family.

This Bacillus subtilis (strain 168) protein is Phage-like element PBSX protein XkdK (xkdK).